Reading from the N-terminus, the 158-residue chain is Cyclic pyranopterin monophosphate synthase (158 aa).

Substrate is bound by residues 75–77 (LCH) and 113–114 (ME). The active site involves D128.

Belongs to the MoaC family. As to quaternary structure, homohexamer; trimer of dimers.

The catalysed reaction is (8S)-3',8-cyclo-7,8-dihydroguanosine 5'-triphosphate = cyclic pyranopterin phosphate + diphosphate. It functions in the pathway cofactor biosynthesis; molybdopterin biosynthesis. Catalyzes the conversion of (8S)-3',8-cyclo-7,8-dihydroguanosine 5'-triphosphate to cyclic pyranopterin monophosphate (cPMP). This is Cyclic pyranopterin monophosphate synthase from Azorhizobium caulinodans (strain ATCC 43989 / DSM 5975 / JCM 20966 / LMG 6465 / NBRC 14845 / NCIMB 13405 / ORS 571).